Here is a 251-residue protein sequence, read N- to C-terminus: 3-deoxy-manno-octulosonate cytidylyltransferase (251 aa).

The protein belongs to the KdsB family.

It is found in the cytoplasm. The enzyme catalyses 3-deoxy-alpha-D-manno-oct-2-ulosonate + CTP = CMP-3-deoxy-beta-D-manno-octulosonate + diphosphate. The protein operates within nucleotide-sugar biosynthesis; CMP-3-deoxy-D-manno-octulosonate biosynthesis; CMP-3-deoxy-D-manno-octulosonate from 3-deoxy-D-manno-octulosonate and CTP: step 1/1. It participates in bacterial outer membrane biogenesis; lipopolysaccharide biosynthesis. In terms of biological role, activates KDO (a required 8-carbon sugar) for incorporation into bacterial lipopolysaccharide in Gram-negative bacteria. This is 3-deoxy-manno-octulosonate cytidylyltransferase from Chelativorans sp. (strain BNC1).